A 405-amino-acid polypeptide reads, in one-letter code: MNHLPMPTFGPLAGVRVVFSGIEIAAPFAGQMFAEWGAEVIWIENVAWADTIRVQPNYPQLSRRNLHALSLNIFKDEGREAFLKLMETTDIFIEASKGPAFARRGITDEVLWEHNPKLVIAHLSGFGQYGTEEYTNLPAYNTIAQAFSGYLIQNGDVDQPMPPFPYTADYFSGMTATTAALAALHKVRETGKGESIDIAMYEVMLRMGQYFMMDYFNGGEICPRMTKGKDPYYAGCGLYKCADGYIVMELVGITQINECFKDIGLAHILGTPEAPEGTQLIHRVECPYGPLVEEKLDAWLATHTIAEVQARFAELNIACAKVLTIPELEGNPQYVARESITQWQTMDGRTCKGPNIMPKFKNNPGKIWRGMPSHGMDTAAILKNIGYSEADIKELVGKGLAKVED.

CoA is bound by residues Lys-97 and Arg-104. Asp-169 acts as the Nucleophile in catalysis.

It belongs to the CoA-transferase III family. CaiB subfamily. In terms of assembly, homodimer.

It is found in the cytoplasm. It catalyses the reaction crotonobetainyl-CoA + (R)-carnitine = crotonobetaine + (R)-carnitinyl-CoA. The catalysed reaction is 4-(trimethylamino)butanoyl-CoA + (R)-carnitine = (R)-carnitinyl-CoA + 4-(trimethylamino)butanoate. The protein operates within amine and polyamine metabolism; carnitine metabolism. Functionally, catalyzes the reversible transfer of the CoA moiety from gamma-butyrobetainyl-CoA to L-carnitine to generate L-carnitinyl-CoA and gamma-butyrobetaine. Is also able to catalyze the reversible transfer of the CoA moiety from gamma-butyrobetainyl-CoA or L-carnitinyl-CoA to crotonobetaine to generate crotonobetainyl-CoA. The protein is L-carnitine CoA-transferase of Salmonella gallinarum (strain 287/91 / NCTC 13346).